A 695-amino-acid chain; its full sequence is U1 snRNP-associated protein usp107 (695 aa).

Residues 85–96 (RDNESQQKDRKN) are compositionally biased toward basic and acidic residues. The tract at residues 85 to 134 (RDNESQQKDRKNLPRNQKSNEIQEKQTFQTPSSEKSTTERESRPFVPPNS) is disordered. The span at 98 to 113 (PRNQKSNEIQEKQTFQ) shows a compositional bias: polar residues. One can recognise an RRM domain in the interval 139 to 221 (RMLFIGNIPK…PSTRLSLITD (83 aa)). A coiled-coil region spans residues 265-369 (DVRSRIERAA…NLLSKHRISR (105 aa)). 2 stretches are compositionally biased toward basic and acidic residues: residues 487–506 (EEDA…RTRG) and 548–561 (SERR…RLLL). 2 disordered regions span residues 487–509 (EEDA…GEGA) and 540–590 (QTKK…AEKT). In terms of domain architecture, PWI spans 605–695 (ESLWALPIDW…HVLLILRSEA (91 aa)).

As to quaternary structure, component of the U1 snRNP particle, a subcomplex of the spliceosome. Interacts with prp5 and usp102.

The protein localises to the cytoplasm. It is found in the nucleus. Its function is as follows. Component of the U1 snRNP particle, which recognizes and binds the 5'-splice site of pre-mRNA. Together with other non-snRNP factors, U1 snRNP forms the spliceosomal commitment complex, that targets pre-mRNA to the splicing pathway. This chain is U1 snRNP-associated protein usp107 (usp107), found in Schizosaccharomyces pombe (strain 972 / ATCC 24843) (Fission yeast).